We begin with the raw amino-acid sequence, 504 residues long: Ribose import ATP-binding protein RbsA 3 (504 aa).

ABC transporter domains follow at residues 6 to 238 (ANLK…VGRP) and 251 to 494 (IGAE…MMGG). 38 to 45 (GENGAGKS) is an ATP binding site.

This sequence belongs to the ABC transporter superfamily. Ribose importer (TC 3.A.1.2.1) family. In terms of assembly, the complex is composed of an ATP-binding protein (RbsA), two transmembrane proteins (RbsC) and a solute-binding protein (RbsB).

It is found in the cell inner membrane. The catalysed reaction is D-ribose(out) + ATP + H2O = D-ribose(in) + ADP + phosphate + H(+). Its function is as follows. Part of the ABC transporter complex RbsABC involved in ribose import. Responsible for energy coupling to the transport system. The protein is Ribose import ATP-binding protein RbsA 3 of Rhizobium meliloti (strain 1021) (Ensifer meliloti).